The chain runs to 163 residues: MKELEKYSTCLKCIDEFSQNLGIKKKDRTIFKMKQSENENEKCLVLENGSFESPEPWFVIDENDEIHTLLSLQSLKNILESLKQSQKENFELRLEKAIYQQIPVDFNDVWTVAMDEIKQKAQNGTMEVSIDLEKLISKIKQEHPNLFVDMQAMIEKVNQNERL.

Belongs to the UPF0763 family.

This is UPF0763 protein JJD26997_0796 from Campylobacter jejuni subsp. doylei (strain ATCC BAA-1458 / RM4099 / 269.97).